The following is a 484-amino-acid chain: Glutamate--tRNA ligase (484 aa).

The 'HIGH' region motif lies at 11–21 (PSPTGYPHLGN). 4 residues coordinate Zn(2+): Cys-108, Cys-110, Cys-135, and Asp-137. A 'KMSKS' region motif is present at residues 245-249 (KLSKR). An ATP-binding site is contributed by Lys-248.

The protein belongs to the class-I aminoacyl-tRNA synthetase family. Glutamate--tRNA ligase type 1 subfamily. In terms of assembly, monomer. Zn(2+) is required as a cofactor.

It is found in the cytoplasm. It carries out the reaction tRNA(Glu) + L-glutamate + ATP = L-glutamyl-tRNA(Glu) + AMP + diphosphate. Catalyzes the attachment of glutamate to tRNA(Glu) in a two-step reaction: glutamate is first activated by ATP to form Glu-AMP and then transferred to the acceptor end of tRNA(Glu). This is Glutamate--tRNA ligase from Dehalococcoides mccartyi (strain ATCC BAA-2266 / KCTC 15142 / 195) (Dehalococcoides ethenogenes (strain 195)).